The sequence spans 249 residues: uncharacterized protein (249 aa).

The span at 51–67 shows a compositional bias: polar residues; it reads IPKDSLTNGKSSKNCMS. 2 disordered regions span residues 51 to 131 and 205 to 240; these read IPKD…DSPV and YLNA…SSDG. The span at 93-106 shows a compositional bias: low complexity; it reads SFQSMNSSMSSSTQ. A compositionally biased stretch (basic and acidic residues) spans 110–129; the sequence is RILDEKNKDQSSSNENDRDS.

It belongs to the asfivirus DP238L family.

This is an uncharacterized protein from African swine fever virus (isolate Tick/Malawi/Lil 20-1/1983) (ASFV).